The chain runs to 172 residues: 3-hydroxydecanoyl-[acyl-carrier-protein] dehydratase (172 aa).

Residue His-71 is part of the active site.

This sequence belongs to the thioester dehydratase family. FabA subfamily. As to quaternary structure, homodimer.

The protein localises to the cytoplasm. The enzyme catalyses a (3R)-hydroxyacyl-[ACP] = a (2E)-enoyl-[ACP] + H2O. It catalyses the reaction (3R)-hydroxydecanoyl-[ACP] = (2E)-decenoyl-[ACP] + H2O. It carries out the reaction (2E)-decenoyl-[ACP] = (3Z)-decenoyl-[ACP]. It functions in the pathway lipid metabolism; fatty acid biosynthesis. In terms of biological role, necessary for the introduction of cis unsaturation into fatty acids. Catalyzes the dehydration of (3R)-3-hydroxydecanoyl-ACP to E-(2)-decenoyl-ACP and then its isomerization to Z-(3)-decenoyl-ACP. Can catalyze the dehydratase reaction for beta-hydroxyacyl-ACPs with saturated chain lengths up to 16:0, being most active on intermediate chain length. This chain is 3-hydroxydecanoyl-[acyl-carrier-protein] dehydratase, found in Proteus mirabilis (strain HI4320).